The chain runs to 271 residues: Co-chaperone protein DjlA (271 aa).

At 1 to 6 (MQYWGK) the chain is on the periplasmic side. A helical membrane pass occupies residues 7–31 (IIGVAVALIMGGGFWGVVLGLLIGH). The Cytoplasmic segment spans residues 32-271 (MFDKARSRKM…ELIKQQKGFK (240 aa)). In terms of domain architecture, J spans 205–271 (DACNVLGVKP…ELIKQQKGFK (67 aa)).

As to quaternary structure, homodimer.

The protein localises to the cell inner membrane. Its function is as follows. Regulatory DnaK co-chaperone. Direct interaction between DnaK and DjlA is needed for the induction of the wcaABCDE operon, involved in the synthesis of a colanic acid polysaccharide capsule, possibly through activation of the RcsB/RcsC phosphotransfer signaling pathway. The colanic acid capsule may help the bacterium survive conditions outside the host. This Escherichia coli O6:H1 (strain CFT073 / ATCC 700928 / UPEC) protein is Co-chaperone protein DjlA.